We begin with the raw amino-acid sequence, 113 residues long: Large ribosomal subunit protein bL19 (113 aa).

This sequence belongs to the bacterial ribosomal protein bL19 family.

Its function is as follows. This protein is located at the 30S-50S ribosomal subunit interface and may play a role in the structure and function of the aminoacyl-tRNA binding site. The chain is Large ribosomal subunit protein bL19 from Mycobacteroides abscessus (strain ATCC 19977 / DSM 44196 / CCUG 20993 / CIP 104536 / JCM 13569 / NCTC 13031 / TMC 1543 / L948) (Mycobacterium abscessus).